A 178-amino-acid polypeptide reads, in one-letter code: METLYTERLTLRKMELEDADVLCQYWSDPEVTKYMNITPFTDVSQARDMIQMINDLSLEGQANRFSIIVKETDEVIGTCGFNMIDQENGRAEIGYDLGRNHWGKGFASEAVQKLIDYGFTSLNLNRIEAKVEPENTPSIKLLNSLSFQKEGLLRDYEKAKGRLIDVYMFSLLKREYAG.

The N-acetyltransferase domain occupies 9 to 173 (LTLRKMELED…IDVYMFSLLK (165 aa)).

This is an uncharacterized protein from Bacillus licheniformis.